We begin with the raw amino-acid sequence, 521 residues long: MSSIKSKTIIEPSENDIEKGEVDFVSSSISNFEEAYEEGPSLKREFKSRHVNMISVAGAIGTGLVIGSGSALLKGGPGSLFIAYLMTGINLYVVLISLGEMAAFSSDDKGFSGFSSRYVDKALGFATGWNYFFKYAIVYPTNLTAVGIVIHYWRPDLNVGIWVAVFLVVILAINLLHVKYFGEVEFWLSAVKILVLVTLIITCIVITSGGTPVHHKIGFHYWRDPGAFAPYLVEGSTGRFLGFWACLVQSCFAYVGSEVVGIAFGEAPNPEKTIRKSSFQSLFRIATFYVIGVFVLGLCVPYDSDILSSNASKGNAAASPFVVAIKLAQIKVMPDVINACLLVFIISSANSDIYIGSRTLYALAKEGYAPKILMLQTKQGIPWVGCLVTSSFGLLAFMNTKSSSATIFGYFSSAVTVFGTINWINILLSYICYHRATIVQQIPTERIPFRSWGQPYIAYASLIFTGLITFFNGYNAFIHGFKYRSFITSYIGIAAYVIMILGWKFTFKAKRVTSSTVDFRK.

The next 9 helical transmembrane spans lie at 53–73 (MISV…SALL), 78–98 (GSLF…LISL), 158–178 (NVGI…LLHV), 186–206 (FWLS…CIVI), 282–302 (LFRI…CVPY), 336–356 (VINA…IYIG), 380–400 (GIPW…FMNT), 407–427 (IFGY…INIL), and 487–507 (ITSY…KFTF).

Belongs to the amino acid-polyamine-organocation (APC) superfamily.

It localises to the membrane. This is an uncharacterized protein from Schizosaccharomyces pombe (strain 972 / ATCC 24843) (Fission yeast).